We begin with the raw amino-acid sequence, 292 residues long: 33 kDa chaperonin (292 aa).

2 cysteine pairs are disulfide-bonded: Cys230–Cys232 and Cys263–Cys266.

The protein belongs to the HSP33 family. Post-translationally, under oxidizing conditions two disulfide bonds are formed involving the reactive cysteines. Under reducing conditions zinc is bound to the reactive cysteines and the protein is inactive.

Its subcellular location is the cytoplasm. Redox regulated molecular chaperone. Protects both thermally unfolding and oxidatively damaged proteins from irreversible aggregation. Plays an important role in the bacterial defense system toward oxidative stress. The chain is 33 kDa chaperonin from Enterobacter sp. (strain 638).